An 86-amino-acid chain; its full sequence is Large ribosomal subunit protein bL31B (86 aa).

This sequence belongs to the bacterial ribosomal protein bL31 family. Type B subfamily. In terms of assembly, part of the 50S ribosomal subunit.

In Streptococcus pyogenes serotype M1, this protein is Large ribosomal subunit protein bL31B.